We begin with the raw amino-acid sequence, 261 residues long: Phosphate import ATP-binding protein PstB 1 (261 aa).

Positions 8-256 constitute an ABC transporter domain; sequence IKVNNLSFYY…PHDSRTREYV (249 aa). 40–47 is a binding site for ATP; sequence GPSGCGKS.

This sequence belongs to the ABC transporter superfamily. Phosphate importer (TC 3.A.1.7) family. In terms of assembly, the complex is composed of two ATP-binding proteins (PstB), two transmembrane proteins (PstC and PstA) and a solute-binding protein (PstS).

The protein localises to the cell inner membrane. It catalyses the reaction phosphate(out) + ATP + H2O = ADP + 2 phosphate(in) + H(+). Part of the ABC transporter complex PstSACB involved in phosphate import. Responsible for energy coupling to the transport system. The chain is Phosphate import ATP-binding protein PstB 1 from Nostoc sp. (strain PCC 7120 / SAG 25.82 / UTEX 2576).